A 91-amino-acid polypeptide reads, in one-letter code: Secretoglobin family 3A member 2 (91 aa).

A signal peptide spans M1–A21.

This sequence belongs to the secretoglobin family. UGRP subfamily. As to quaternary structure, homodimer; disulfide-linked. Monomer. Interacts with APOA1. As to expression, highly expressed in lung where it localizes to epithelial cells of the trachea, bronchus and bronchioles (at protein level). Expressed in club cells of the bronchioles. Also detected in the anterior and posterior lobes of the pituitary gland where it may localize to gonadotropic cells (at protein level). Not detected in other tissues tested.

The protein localises to the secreted. Secreted cytokine-like protein. Binds to the scavenger receptor MARCO. Can also bind to pathogens including the Gram-positive bacterium L.monocytogenes, the Gram-negative bacterium P.aeruginosa, and yeast. Strongly inhibits phospholipase A2 (PLA2G1B) activity. Seems to have anti-inflammatory effects in respiratory epithelium. Also has anti-fibrotic activity in lung. May play a role in fetal lung development and maturation. Promotes branching morphogenesis during early stages of lung development. In the pituitary, may inhibit production of follicle-stimulating hormone (FSH) and luteinizing hormone (LH). The polypeptide is Secretoglobin family 3A member 2 (Scgb3a2) (Mus musculus (Mouse)).